The following is a 512-amino-acid chain: MNTVQKAIELILHKGLRKYKSKNSKAGLVSIANQEKFESKVLNGKKNKKGSIFITRKKEDLRAKFGTRGVVLSSEEAVLDHVGQASHWTPNVYNFGTYGQNGLRTIVGHTEKNLQQINCFVIDIDSKSFPMTAINDVALNAGFGVPTMILETTKGYQVYYVLDKAVYVSNNKNFIAIKSAKRISQNLREMFADSLPNVDLTCNHFGFFRMPSVQNIVMFFEENVYTFKELQEWSKRQDDNKGNEQFHNVIESPFAKNAPVEQPKQMDELWFKQVISCTNVSPKQTKAGRNNAIFTLSLACFQSQYAIKDTMDLMDQFNSNLEQPLEHTEVRGIVMSAYSGKYQAAHKDYIERLLQTYGMGQASAFRAPSVLWKKHKKQRKDRVRSHWHEWEADIITFLSMNSNNKPVLYFTQSELCEALNVPRSTLNTVLKKSTKIYKTVEGKGKTAKTGLSTLGMLIAFALKENGKRRESYLNYLQGLFPKTGNILEQAKTSNVMEEQETLYGILEGLPAG.

Essential for replication. Binds specifically to a 60-bp region corresponding to the putative origin of replication of pXO2. Also binds nonspecifically to single-stranded DNA with lower affinity. In Bacillus anthracis, this protein is Replication initiation protein (repS).